The following is a 462-amino-acid chain: Argininosuccinate lyase (462 aa).

Belongs to the lyase 1 family. Argininosuccinate lyase subfamily.

The protein resides in the cytoplasm. The catalysed reaction is 2-(N(omega)-L-arginino)succinate = fumarate + L-arginine. It functions in the pathway amino-acid biosynthesis; L-arginine biosynthesis; L-arginine from L-ornithine and carbamoyl phosphate: step 3/3. This is Argininosuccinate lyase from Bacillus cereus (strain ATCC 10987 / NRS 248).